The chain runs to 468 residues: MRRFCVVPLLLVLVEAAQKSDLGGDASAALINHSPMLIQRLQDLFHKGNSTDTILRIRTANSDEVKVIHVHQLLLTLQSDIFDGLLLNQSEVTLQEPAECAALFEKFIRYFYCGEISVNLNQAIPLHRLANKYHMTALQRGVTEYMKTHFSSESAQGHVVSWYHYALRMGDINLQESCLKFLAWNLSTIMSSNEWVTVSDKLMVSLLQRSDLVLQSELELFSAVEEWISKNKPDAPVIEKVLRSIRYPMISPSQLFQIQKESAVLASYHNSVQDLMFQAFQFHSASPLHFAKYFDVNCSMFVPRNYLSPSWGSQWIINNPARDDRSLTFQTQLGPSNHDTSKKMTWNALFSPRWLPVSLRPVYSESIPSSSQSNRLEEGKPRLVVTSAMSGMDFAGVTFQKTLLVGVKRQQSKVFVKHVYNVHQSTDEVFDFLLQADLQKRTSEYLIDNSLHLHIIIKPIYHSLIKAK.

Positions 1-16 are cleaved as a signal peptide; it reads MRRFCVVPLLLVLVEA. One can recognise a BTB domain in the interval 51-120; the sequence is TDTILRIRTA…FYCGEISVNL (70 aa). The BACK domain maps to 159-259; it reads VVSWYHYALR…ISPSQLFQIQ (101 aa).

It is found in the secreted. The polypeptide is BTB/POZ domain-containing protein 17 (btbd17) (Xenopus tropicalis (Western clawed frog)).